Reading from the N-terminus, the 185-residue chain is Dual specificity protein phosphatase 3 (185 aa).

A Tyrosine-protein phosphatase domain is found at 28-179 (QPCNEVTPRI…LCQLNDRLAK (152 aa)). The active-site Phosphocysteine intermediate is the cysteine 124.

It belongs to the protein-tyrosine phosphatase family. Non-receptor class dual specificity subfamily. As to quaternary structure, microtubule inner protein component of sperm flagellar doublet microtubules. Interacts with VRK3; this interaction activates DUSP3 phosphatase activity.

The protein localises to the nucleus. It is found in the cytoplasm. Its subcellular location is the cytoskeleton. The protein resides in the flagellum axoneme. The enzyme catalyses O-phospho-L-tyrosyl-[protein] + H2O = L-tyrosyl-[protein] + phosphate. It carries out the reaction O-phospho-L-seryl-[protein] + H2O = L-seryl-[protein] + phosphate. The catalysed reaction is O-phospho-L-threonyl-[protein] + H2O = L-threonyl-[protein] + phosphate. Functionally, shows activity both for tyrosine-protein phosphate and serine-protein phosphate, but displays a strong preference toward phosphotyrosines. Specifically dephosphorylates and inactivates ERK1 and ERK2. The polypeptide is Dual specificity protein phosphatase 3 (DUSP3) (Homo sapiens (Human)).